A 329-amino-acid polypeptide reads, in one-letter code: Endonuclease 8-like 2 (329 aa).

Pro2 functions as the Schiff-base intermediate with DNA in the catalytic mechanism. Glu3 functions as the Proton donor in the catalytic mechanism. The Proton donor; for beta-elimination activity role is filled by Lys50. At Lys50 the chain carries N6-acetyllysine. Ser68 is modified (phosphoserine). Residues 88 to 112 are disordered; it reads GPSAQEPSAGPSGSGEPVPSRSAET. N6-acetyllysine is present on Lys150. Asn227 contacts DNA. An FPG-type zinc finger spans residues 280–316; sequence QIYQKEQCPSGHQVMKETFGPPDGLQRLTWWCPQCQP. Arg306 functions as the Proton donor; for delta-elimination activity in the catalytic mechanism.

This sequence belongs to the FPG family. Binds EP300.

The protein localises to the nucleus. It carries out the reaction 2'-deoxyribonucleotide-(2'-deoxyribose 5'-phosphate)-2'-deoxyribonucleotide-DNA = a 3'-end 2'-deoxyribonucleotide-(2,3-dehydro-2,3-deoxyribose 5'-phosphate)-DNA + a 5'-end 5'-phospho-2'-deoxyribonucleoside-DNA + H(+). With respect to regulation, acetylation of Lys-50 leads to loss of DNA nicking activity. Involved in base excision repair of DNA damaged by oxidation or by mutagenic agents. Has DNA glycosylase activity towards 5-hydroxyuracil and other oxidized derivatives of cytosine with a preference for mismatched double-stranded DNA (DNA bubbles). Has low or no DNA glycosylase activity towards thymine glycol, 2-hydroxyadenine, hypoxanthine and 8-oxoguanine. Has AP (apurinic/apyrimidinic) lyase activity and introduces nicks in the DNA strand. Cleaves the DNA backbone by beta-delta elimination to generate a single-strand break at the site of the removed base with both 3'- and 5'-phosphates. The protein is Endonuclease 8-like 2 (Neil2) of Mus musculus (Mouse).